The sequence spans 53 residues: Large ribosomal subunit protein eL40 (53 aa).

It belongs to the eukaryotic ribosomal protein eL40 family.

This is Large ribosomal subunit protein eL40 from Pyrobaculum aerophilum (strain ATCC 51768 / DSM 7523 / JCM 9630 / CIP 104966 / NBRC 100827 / IM2).